The following is a 140-amino-acid chain: Large ribosomal subunit protein bL17 (140 aa).

It belongs to the bacterial ribosomal protein bL17 family. As to quaternary structure, part of the 50S ribosomal subunit. Contacts protein L32.

In Rhizobium rhizogenes (strain K84 / ATCC BAA-868) (Agrobacterium radiobacter), this protein is Large ribosomal subunit protein bL17.